We begin with the raw amino-acid sequence, 504 residues long: Dimethylsulfoniopropionate lyase 5 (504 aa).

The protein belongs to the aspartate/glutamate racemases family. ALMA1 subfamily. Homotetramer.

It catalyses the reaction S,S-dimethyl-beta-propiothetin = acrylate + dimethyl sulfide + H(+). In terms of biological role, mediates cleavage of dimethylsulfoniopropionate (DMSP) into dimethyl sulfide (DMS) and acrylate. DMS is the principal form by which sulfur is transported from oceans to the atmosphere and is a key component of the ocean sulfur cycle. The polypeptide is Dimethylsulfoniopropionate lyase 5 (Emiliania huxleyi (strain CCMP1516)).